Reading from the N-terminus, the 605-residue chain is MEIVYVYVKKRSEFGKQCNFSDRQAELNIDIMPNPELAEQFVERNPVDTGIQCSISMSEHEANSERFEMETRGVNHVEGGWPKDVNPLELEQTIRFRKKVEKDENYVNAIMQLGSIMEHCIKQNNAIDIYEEYFNDEEAMEVMEEDPSAKTINVFRDPQEIKRAATHLSWHPDGNRKLAVAYSCLDFQRAPVGMSSDSYIWDLENPNKPELALKPSSPLVTLEFNPKDSHVLLGGCYNGQIACWDTRKGSLVAELSTIESSHRDPVYGTIWLQSKTGTECFSASTDGQVMWWDIRKMSEPTEVVILDITKKEQLENALGAISLEFESTLPTKFMVGTEQGIVISCNRKAKTSAEKIVCTFPGHHGPIYALQRNPFYPKNFLTVGDWTARIWSEDSRESSIMWTKYHMAYLTDAAWSPVRPTVFFTTRMDGTLDIWDFMFEQCDPTLSLKVCDEALFCLRVQDNGCLIACGSQLGTTTLLEVSPGLSTLQRNEKNVASSMFERETRREKILEARHREMRLKEKGKAEGRDEEQTDEELAVDLEALVSKAEEEFFDIIFAELKKKEADAIKLTPVPQQPSPEEDQVVEEGEEAAGEEGDEEVEEDLA.

7 WD repeats span residues 150 to 203, 208 to 246, 253 to 294, 301 to 347, 355 to 393, 399 to 437, and 443 to 481; these read KTIN…IWDL, KPEL…CWDT, AELS…WWDI, TEVV…SCNR, KIVC…IWSE, SIMW…IWDF, and DPTL…LLEV. The tract at residues 568–605 is disordered; it reads IKLTPVPQQPSPEEDQVVEEGEEAAGEEGDEEVEEDLA. Residues 579–605 are compositionally biased toward acidic residues; sequence PEEDQVVEEGEEAAGEEGDEEVEEDLA.

This sequence belongs to the dynein intermediate chain family. In terms of assembly, consists of at least two heavy chains and a number of intermediate and light chains. Interacts with DNAAF2. Interacts with DNAAF6/PIH1D3. Interacts with HEATR2; probably involved in outer arm dynein assembly. Interacts with CFAP53. As to expression, highly expressed in trachea and testis. Expressed in respiratory ciliated cells (at protein level).

The protein localises to the cytoplasm. It localises to the cytoskeleton. It is found in the cilium axoneme. Its subcellular location is the dynein axonemal particle. Its function is as follows. Part of the dynein complex of respiratory cilia. The protein is Dynein axonemal intermediate chain 2 of Homo sapiens (Human).